Here is a 525-residue protein sequence, read N- to C-terminus: Probable bifunctional tRNA threonylcarbamoyladenosine biosynthesis protein (525 aa).

The segment at 1–322 (MPEKRVLGIE…FRSDQVEVTW (322 aa)) is kae1. Fe cation is bound by residues histidine 106, histidine 110, and tyrosine 127. Residues 127–131 (YASGA), aspartate 159, glycine 172, glutamate 176, and asparagine 255 contribute to the L-threonylcarbamoyladenylate site. Aspartate 283 lines the Fe cation pocket. The Protein kinase domain occupies 331–525 (APGQSETAER…HEIELRGRYL (195 aa)). ATP is bound by residues 338–346 (AERGAEASV) and lysine 355. The active-site Proton acceptor; for kinase activity is the aspartate 442.

It in the N-terminal section; belongs to the KAE1 / TsaD family. In the C-terminal section; belongs to the protein kinase superfamily. Tyr protein kinase family. BUD32 subfamily. As to quaternary structure, component of the KEOPS complex that consists of Kae1, Bud32, Cgi121 and Pcc1; the whole complex dimerizes. It depends on Fe(2+) as a cofactor.

Its subcellular location is the cytoplasm. The enzyme catalyses L-seryl-[protein] + ATP = O-phospho-L-seryl-[protein] + ADP + H(+). It carries out the reaction L-threonyl-[protein] + ATP = O-phospho-L-threonyl-[protein] + ADP + H(+). The catalysed reaction is L-threonylcarbamoyladenylate + adenosine(37) in tRNA = N(6)-L-threonylcarbamoyladenosine(37) in tRNA + AMP + H(+). In terms of biological role, required for the formation of a threonylcarbamoyl group on adenosine at position 37 (t(6)A37) in tRNAs that read codons beginning with adenine. Is a component of the KEOPS complex that is probably involved in the transfer of the threonylcarbamoyl moiety of threonylcarbamoyl-AMP (TC-AMP) to the N6 group of A37. The Kae1 domain likely plays a direct catalytic role in this reaction. The Bud32 domain probably displays kinase activity that regulates Kae1 function. This chain is Probable bifunctional tRNA threonylcarbamoyladenosine biosynthesis protein, found in Methanocorpusculum labreanum (strain ATCC 43576 / DSM 4855 / Z).